A 214-amino-acid polypeptide reads, in one-letter code: 14-3-3 protein homolog 2 (214 aa).

This sequence belongs to the 14-3-3 family.

The polypeptide is 14-3-3 protein homolog 2 (Schistosoma mansoni (Blood fluke)).